The sequence spans 212 residues: Ribosomal RNA small subunit methyltransferase G (212 aa).

S-adenosyl-L-methionine-binding positions include Gly-80, Leu-85, 131–132 (AE), and Arg-146.

It belongs to the methyltransferase superfamily. RNA methyltransferase RsmG family.

The protein localises to the cytoplasm. It catalyses the reaction guanosine(527) in 16S rRNA + S-adenosyl-L-methionine = N(7)-methylguanosine(527) in 16S rRNA + S-adenosyl-L-homocysteine. Specifically methylates the N7 position of guanine in position 527 of 16S rRNA. The polypeptide is Ribosomal RNA small subunit methyltransferase G (Stenotrophomonas maltophilia (strain K279a)).